Reading from the N-terminus, the 1399-residue chain is DNA-directed RNA polymerase subunit beta' (1399 aa).

Zn(2+) is bound by residues cysteine 70, cysteine 72, cysteine 85, and cysteine 88. 3 residues coordinate Mg(2+): aspartate 460, aspartate 462, and aspartate 464. The Zn(2+) site is built by cysteine 814, cysteine 888, cysteine 895, and cysteine 898.

It belongs to the RNA polymerase beta' chain family. In terms of assembly, the RNAP catalytic core consists of 2 alpha, 1 beta, 1 beta' and 1 omega subunit. When a sigma factor is associated with the core the holoenzyme is formed, which can initiate transcription. Requires Mg(2+) as cofactor. The cofactor is Zn(2+).

The enzyme catalyses RNA(n) + a ribonucleoside 5'-triphosphate = RNA(n+1) + diphosphate. In terms of biological role, DNA-dependent RNA polymerase catalyzes the transcription of DNA into RNA using the four ribonucleoside triphosphates as substrates. The polypeptide is DNA-directed RNA polymerase subunit beta' (Pseudomonas fluorescens (strain SBW25)).